The primary structure comprises 2151 residues: Calpain-type cysteine protease DEK1 (2151 aa).

The first 32 residues, 1 to 32 (MEGDERGVLLACVISGTLFTVFGSGSFWILWA), serve as a signal peptide directing secretion. Residues 33-69 (VNWRPWRLYSWIFARKWPKVLQGPQLDILCGVLSLFA) lie on the Extracellular side of the membrane. Residues 70–90 (WIVVVSPIAILIGWGSWLIVI) traverse the membrane as a helical segment. Residues 91-94 (LDRH) lie on the Cytoplasmic side of the membrane. Residues 95–115 (IIGLAIIMAGTALLLAFYSIM) form a helical membrane-spanning segment. Residues 116-126 (LWWRTQWQSSR) are Extracellular-facing. The chain crosses the membrane as a helical span at residues 127-147 (AVALLLLLGVALLCAYELCAV). The Cytoplasmic segment spans residues 148-163 (YVTAGAHASQQYSPSG). A helical transmembrane segment spans residues 164–184 (FFFGVSAIALAINMLFICRMV). Over 185–235 (FNGNGLDVDEYVRRAYKFAYSDCIEVGPVACLPEPPDPNELYPRQTSRASH) the chain is Extracellular. Residues 236 to 256 (LGLLYLGSLVVLLAYSVLYGL) traverse the membrane as a helical segment. The Cytoplasmic portion of the chain corresponds to 257–263 (TARESRW). The helical transmembrane segment at 264 to 284 (LGGITSAAVIVLDWNIGACLY) threads the bilayer. Residues 285-293 (GFKLLQNRV) lie on the Extracellular side of the membrane. Residues 294-314 (LALFVAGISRLFLICFGIHYW) traverse the membrane as a helical segment. The Cytoplasmic portion of the chain corresponds to 315–319 (YLGHC). Residues 320–340 (ISYIFVASVLSGAAVSRHLSI) traverse the membrane as a helical segment. Residues 341–615 (TDPSAARRDA…LLLHHVAGTP (275 aa)) are Extracellular-facing. Disordered regions lie at residues 363 to 393 (RRKEQNSSSSSSDGCGSSIKRSSSIDAGHTG) and 405 to 442 (CTADNLTRTGSSQEGINSDKSEESGRPSLGLRSSSCRS). The segment covering 369–388 (SSSSSSDGCGSSIKRSSSID) has biased composition (low complexity). Positions 405–420 (CTADNLTRTGSSQEGI) are enriched in polar residues. Over residues 430 to 442 (RPSLGLRSSSCRS) the composition is skewed to low complexity. The chain crosses the membrane as a helical span at residues 616 to 636 (ERAWGLFSLVFILETIIVAIF). The Cytoplasmic segment spans residues 637 to 652 (RPKTITIINSSHQQFE). The helical transmembrane segment at 653-673 (FGFSVLLLSPVVCSIMAFLRS) threads the bilayer. Topologically, residues 674 to 686 (LQVEEMALTSKSR) are extracellular. A helical transmembrane segment spans residues 687 to 707 (KYGFVAWLLSTSVGLSLSFLS). The Cytoplasmic portion of the chain corresponds to 708–711 (KSSV). Residues 712–732 (LLGISLTVPLMAACLSIAVPI) traverse the membrane as a helical segment. Over 733 to 760 (WMHNGYQFWVPQLSCGDQARDLRSPRIK) the chain is Extracellular. A helical membrane pass occupies residues 761–782 (GFILWICVVLFAGSVISLGAII). Residues 783 to 813 (SAKPLDDLKYKLFSARENNVTSPYTSSVYLG) lie on the Cytoplasmic side of the membrane. Residues 814–834 (WAMSSGIALVVTAILPIVSWF) form a helical membrane-spanning segment. Over 835–844 (ATYRFSHSSA) the chain is Extracellular. Residues 845-865 (VCLMIFSVVLVAFCGTSYLEV) traverse the membrane as a helical segment. The Cytoplasmic portion of the chain corresponds to 866 to 878 (VKSRDDQLPTKGD). A helical transmembrane segment spans residues 879 to 899 (FLAALLPLACIPALLSLCCGM). The Extracellular segment spans residues 900 to 912 (VKWKDDCWILSRG). The chain crosses the membrane as a helical span at residues 913-933 (VYVFFSIGLLLLFGAIAAVIA). The Cytoplasmic portion of the chain corresponds to 934–936 (VKP). The helical transmembrane segment at 937–957 (WTIGVSFLLVLFLMVVTIGVI) threads the bilayer. Residues 958–971 (HLWASNNFYLTRKQ) are Extracellular-facing. The helical transmembrane segment at 972 to 992 (TSFVCFLALLLGLAAFLLGWH) threads the bilayer. The Cytoplasmic portion of the chain corresponds to 993–1006 (QDKAFAGASVGYFT). Residues 1007–1027 (FLSLLAGRALAVLLSPPIVVY) form a helical membrane-spanning segment. Topologically, residues 1028–1050 (SPRVLPVYVYDAHADCGKNVSAA) are extracellular. The helical transmembrane segment at 1051 to 1071 (FLVLYGIALATEGWGVVASLI) threads the bilayer. Residues 1072–2151 (IYPPFAGAAV…TKASIVLEAL (1080 aa)) are Cytoplasmic-facing. Calpain catalytic domains are found at residues 1407–1600 (SGKH…DMID) and 1695–1997 (QFTD…CRVY). Residues C1761, H1919, and N1939 contribute to the active site.

It belongs to the peptidase C2 family. In terms of processing, autocatalytic proteolytic cleavage leading to the production of mainly cytoplasmic localized subproducts of about 85 and 120 kDa. Mostly expressed in meristems and organ primordia. Expressed at low levels in young and germinating seeds at 10 ppm and in seedling roots at 67 ppm. Present in most tissues at a low level.

The protein resides in the cell membrane. It is found in the endosome membrane. The protein localises to the endoplasmic reticulum membrane. It localises to the cytoplasm. In terms of biological role, essential protease involved in epiderm development. Required for aleurone cell development in the endosperm probably by maintaining and restricting the aleurone and embryonic epidermal L1 cell-layer fates as well as meristems organization. Involved in the maintenance of adaxial/abaxial axis information in developing leaves, probably by regulating cell proliferation and expansion. Does not need calcium ions to be active. Required for the formation of giant cells in sepals by determining cell fate and promoting endoreplication. The protein is Calpain-type cysteine protease DEK1 of Arabidopsis thaliana (Mouse-ear cress).